We begin with the raw amino-acid sequence, 1086 residues long: NAD(P) transhydrogenase, mitochondrial (1086 aa).

Residues 1–43 constitute a mitochondrion transit peptide; that stretch reads MANLLKTVVTGCSCPFLSNLGSCKVLPGKKNFLRAFHTHRILW. Residues 44-474 lie on the Mitochondrial matrix side of the membrane; that stretch reads CKAPVKPGIP…TITPFRKTMT (431 aa). Residue Lys70 is modified to N6-acetyllysine. An N6-succinyllysine modification is found at Lys117. Residue 182-184 coordinates NAD(+); it reads RVT. Lys224 carries the N6-succinyllysine modification. NAD(+) contacts are provided by residues Val237, 257 to 259, and Gly287; that span reads DTR. Lys294 carries the post-translational modification N6-succinyllysine. NAD(+) contacts are provided by Glu300 and Leu319. The residue at position 331 (Lys331) is an N6-succinyllysine. Lys397 bears the N6-acetyllysine mark. 4 consecutive transmembrane segments (helical) span residues 475–493, 501–521, 527–546, and 558–578; these read SASVYTAGLTGILGLGIAA, MVTTFGLAGIVGYHTVWGVTP, LMSVTNAISGLTAVGGLVLM, and GLAALATFISSVNIAGGFLVT. At 579-595 the chain is on the mitochondrial matrix side; the sequence is QRMLDMFKRPTDPPEYN. A run of 5 helical transmembrane segments spans residues 596-616, 622-642, 646-666, 672-691, and 702-722; these read YLYLLPAGTFVGGYLASLYSG, IMYLGSGLCCVGALAGLSTQG, LGNALGMIGVAGGLAATLGGL, LLAQMSGAMALGGTIGLTIA, and LVAAFHSLVGLAAVLTCIAEY. Topologically, residues 723-739 are cytoplasmic; it reads IIEYPHFATDAAANLTK. 5 consecutive transmembrane segments (helical) span residues 740–760, 778–797, 801–819, 833–853, and 857–879; these read IVAYLGTYIGGVTFSGSLVAY, HLLNAGLLAASVGGIIPFMM, FTTGITCLGSVSALSAVMG, VVITVLNSYSGWALCAEGFLL, and LLTIVGALIGSSGAILSYIMCVA. The Mitochondrial matrix segment spans residues 880 to 1086; sequence MNRSLANVIL…QAKVRESYQK (207 aa). NADP(+) contacts are provided by residues Tyr933, 965–970, 1007–1011, 1026–1027, 1042–1049, and 1068–1069; these read VAGRMP, GANDT, GM, KRSLGVGY, and DA. An N6-succinyllysine modification is found at Lys1079.

The protein in the N-terminal section; belongs to the AlaDH/PNT family. It in the C-terminal section; belongs to the PNT beta subunit family. As to quaternary structure, homodimer.

The protein localises to the mitochondrion inner membrane. It carries out the reaction NAD(+) + NADPH + H(+)(in) = NADH + NADP(+) + H(+)(out). The transhydrogenation between NADH and NADP is coupled to respiration and ATP hydrolysis and functions as a proton pump across the membrane. May play a role in reactive oxygen species (ROS) detoxification in the adrenal gland. The polypeptide is NAD(P) transhydrogenase, mitochondrial (NNT) (Ovis aries (Sheep)).